Reading from the N-terminus, the 88-residue chain is uncharacterized protein (88 aa).

3 helical membrane-spanning segments follow: residues 3 to 23, 33 to 53, and 61 to 81; these read VFIL…CSVA, VAPG…AFTA, and FIGG…PFFF.

It is found in the cell membrane. This is an uncharacterized protein from Bacillus subtilis (strain 168).